Reading from the N-terminus, the 211-residue chain is MAPSRNGMILKPHFHKDWQRRVDTWFNQPARKIRRRKARQAKARRIAPRPASGPIRPIVRCPTVRYHTKVRAGRGFSLEELRVAGIHKKVARTIGISVDPRRRNKSTESLQANVQRLKEYRSKLILFPRKPSAPKKGDSSAEELKLATQLTGPVMRIRNVYKKEKARVITEEEKNFKAFASLRMARANARLFGIRAKRAKEAAEQDVEKKK.

Lys-16 bears the N6-acetyllysine mark. Phosphoserine is present on residues Ser-52, Ser-77, and Ser-106. Glycyl lysine isopeptide (Lys-Gly) (interchain with G-Cter in SUMO2) cross-links involve residues Lys-123 and Lys-145. Lys-174 participates in a covalent cross-link: Glycyl lysine isopeptide (Lys-Gly) (interchain with G-Cter in SUMO1); alternate. Residues Lys-174 and Lys-177 each participate in a glycyl lysine isopeptide (Lys-Gly) (interchain with G-Cter in SUMO2); alternate cross-link. Residue Lys-177 is modified to N6-acetyllysine; alternate.

The protein belongs to the eukaryotic ribosomal protein eL13 family. In terms of assembly, component of the 60S large ribosomal subunit (LSU).

Its subcellular location is the cytoplasm. Functionally, component of the ribosome, a large ribonucleoprotein complex responsible for the synthesis of proteins in the cell. The small ribosomal subunit (SSU) binds messenger RNAs (mRNAs) and translates the encoded message by selecting cognate aminoacyl-transfer RNA (tRNA) molecules. The large subunit (LSU) contains the ribosomal catalytic site termed the peptidyl transferase center (PTC), which catalyzes the formation of peptide bonds, thereby polymerizing the amino acids delivered by tRNAs into a polypeptide chain. The nascent polypeptides leave the ribosome through a tunnel in the LSU and interact with protein factors that function in enzymatic processing, targeting, and the membrane insertion of nascent chains at the exit of the ribosomal tunnel. As part of the LSU, it is probably required for its formation and the maturation of rRNAs. Plays a role in bone development. The sequence is that of Large ribosomal subunit protein eL13 (RPL13) from Cricetulus griseus (Chinese hamster).